The chain runs to 425 residues: Enolase (425 aa).

Residue glutamine 162 coordinates (2R)-2-phosphoglycerate. Catalysis depends on glutamate 204, which acts as the Proton donor. Mg(2+) is bound by residues aspartate 241, glutamate 288, and aspartate 315. (2R)-2-phosphoglycerate contacts are provided by lysine 340, arginine 369, serine 370, and lysine 391. Lysine 340 serves as the catalytic Proton acceptor.

Belongs to the enolase family. The cofactor is Mg(2+).

The protein localises to the cytoplasm. Its subcellular location is the secreted. It is found in the cell surface. The enzyme catalyses (2R)-2-phosphoglycerate = phosphoenolpyruvate + H2O. Its pathway is carbohydrate degradation; glycolysis; pyruvate from D-glyceraldehyde 3-phosphate: step 4/5. Its function is as follows. Catalyzes the reversible conversion of 2-phosphoglycerate (2-PG) into phosphoenolpyruvate (PEP). It is essential for the degradation of carbohydrates via glycolysis. The sequence is that of Enolase from Porphyromonas gingivalis (strain ATCC 33277 / DSM 20709 / CIP 103683 / JCM 12257 / NCTC 11834 / 2561).